A 347-amino-acid polypeptide reads, in one-letter code: NADH-ubiquinone oxidoreductase chain 2 (347 aa).

11 consecutive transmembrane segments (helical) span residues 3–23 (PPIL…VLTS), 25–45 (HWLL…PILM), 60–80 (FLTQ…NLMF), 96–116 (GLVT…FWVP), 122–142 (ISLS…LSVL), 153–173 (LLIT…LNQT), 178–198 (ILAY…TYNP), 200–220 (LMVL…MLFM), 237–257 (LPLM…LPPL), 274–294 (DMII…YFYM), and 323–343 (IILL…TPMM).

Belongs to the complex I subunit 2 family. Core subunit of respiratory chain NADH dehydrogenase (Complex I) which is composed of 45 different subunits. Interacts with TMEM242.

It localises to the mitochondrion inner membrane. It catalyses the reaction a ubiquinone + NADH + 5 H(+)(in) = a ubiquinol + NAD(+) + 4 H(+)(out). Core subunit of the mitochondrial membrane respiratory chain NADH dehydrogenase (Complex I) which catalyzes electron transfer from NADH through the respiratory chain, using ubiquinone as an electron acceptor. Essential for the catalytic activity and assembly of complex I. This Phoca vitulina (Harbor seal) protein is NADH-ubiquinone oxidoreductase chain 2.